We begin with the raw amino-acid sequence, 231 residues long: 5'-methylthioadenosine/S-adenosylhomocysteine nucleosidase (231 aa).

The Proton acceptor role is filled by E12. Substrate contacts are provided by residues G78, M153, and 174–175 (ME). D198 acts as the Proton donor in catalysis.

This sequence belongs to the PNP/UDP phosphorylase family. MtnN subfamily.

The enzyme catalyses S-adenosyl-L-homocysteine + H2O = S-(5-deoxy-D-ribos-5-yl)-L-homocysteine + adenine. It carries out the reaction S-methyl-5'-thioadenosine + H2O = 5-(methylsulfanyl)-D-ribose + adenine. It catalyses the reaction 5'-deoxyadenosine + H2O = 5-deoxy-D-ribose + adenine. Its pathway is amino-acid biosynthesis; L-methionine biosynthesis via salvage pathway; S-methyl-5-thio-alpha-D-ribose 1-phosphate from S-methyl-5'-thioadenosine (hydrolase route): step 1/2. In terms of biological role, catalyzes the irreversible cleavage of the glycosidic bond in both 5'-methylthioadenosine (MTA) and S-adenosylhomocysteine (SAH/AdoHcy) to adenine and the corresponding thioribose, 5'-methylthioribose and S-ribosylhomocysteine, respectively. Also cleaves 5'-deoxyadenosine, a toxic by-product of radical S-adenosylmethionine (SAM) enzymes, into 5-deoxyribose and adenine. The chain is 5'-methylthioadenosine/S-adenosylhomocysteine nucleosidase from Bacillus licheniformis (strain ATCC 14580 / DSM 13 / JCM 2505 / CCUG 7422 / NBRC 12200 / NCIMB 9375 / NCTC 10341 / NRRL NRS-1264 / Gibson 46).